The primary structure comprises 308 residues: D-alanine--D-alanine ligase (308 aa).

Residues 103–302 (KTVMKTAGVP…FDELVQWMVE (200 aa)) enclose the ATP-grasp domain. 130–184 (MEPPYVIKPVADGSSVGVYIITEQHQHPPQELFRDDWAYGDKLLVEKYVAGKELT) contacts ATP. 3 residues coordinate Mg(2+): D252, E269, and N271.

It belongs to the D-alanine--D-alanine ligase family. It depends on Mg(2+) as a cofactor. Mn(2+) is required as a cofactor.

It is found in the cytoplasm. It carries out the reaction 2 D-alanine + ATP = D-alanyl-D-alanine + ADP + phosphate + H(+). Its pathway is cell wall biogenesis; peptidoglycan biosynthesis. In terms of biological role, cell wall formation. This chain is D-alanine--D-alanine ligase, found in Rhodopseudomonas palustris (strain BisA53).